We begin with the raw amino-acid sequence, 507 residues long: Histidine ammonia-lyase (507 aa).

Residues 141–143 (ASG) constitute a cross-link (5-imidazolinone (Ala-Gly)). 2,3-didehydroalanine (Ser) is present on Ser142.

The protein belongs to the PAL/histidase family. Contains an active site 4-methylidene-imidazol-5-one (MIO), which is formed autocatalytically by cyclization and dehydration of residues Ala-Ser-Gly.

Its subcellular location is the cytoplasm. It carries out the reaction L-histidine = trans-urocanate + NH4(+). It functions in the pathway amino-acid degradation; L-histidine degradation into L-glutamate; N-formimidoyl-L-glutamate from L-histidine: step 1/3. The sequence is that of Histidine ammonia-lyase from Burkholderia pseudomallei (strain 668).